An 877-amino-acid polypeptide reads, in one-letter code: Alanine--tRNA ligase (877 aa).

Zn(2+) contacts are provided by histidine 567, histidine 571, cysteine 669, and histidine 673.

It belongs to the class-II aminoacyl-tRNA synthetase family. It depends on Zn(2+) as a cofactor.

It localises to the cytoplasm. The catalysed reaction is tRNA(Ala) + L-alanine + ATP = L-alanyl-tRNA(Ala) + AMP + diphosphate. In terms of biological role, catalyzes the attachment of alanine to tRNA(Ala) in a two-step reaction: alanine is first activated by ATP to form Ala-AMP and then transferred to the acceptor end of tRNA(Ala). Also edits incorrectly charged Ser-tRNA(Ala) and Gly-tRNA(Ala) via its editing domain. The protein is Alanine--tRNA ligase of Rickettsia typhi (strain ATCC VR-144 / Wilmington).